The chain runs to 90 residues: Defensin-like protein 193 (90 aa).

The signal sequence occupies residues 1–27 (MAMKSVSTLAVFAILFLVIVEMPEIKA). Disulfide bonds link Cys32/Cys86, Cys45/Cys69, Cys54/Cys81, and Cys58/Cys83.

This sequence belongs to the DEFL family. Protease inhibitor I18 (RTI/MTI-2) subfamily.

It is found in the secreted. The chain is Defensin-like protein 193 (ATTI2) from Arabidopsis thaliana (Mouse-ear cress).